The primary structure comprises 647 residues: MADVYPVDPAFAADARITREQYATLYRESIEHPEQFWGKAAQRLDWFKQPTQIKDVSFALDDFHVRWFGDGELNASVNCLDRQLATRGDKTALLFEPDSPDSPSYPVTYRELYERVCKLGNALRNLGVKKGDRVTIYLPMIVDAAVAMLACARIGAVHSVVFGGFAANSIADRVIDCQSKLIITADEGLRGGKKIPLKANVDAALKIPGTNTVETVLVVRHTGGAVDMQAPRDRWFHDVVDGQPAECEPERMNAEDPLFILYTSGSTGKPKGVLHTTAGYLLFASYTHEVVFDLREDDIYWCTADVGWVTGHSYIVYGPLANGATAVMFEGVPNYPNVSRFWEVIDKHQVTIFYTAPTAIRALMREGEAPVKKTSRSSLRLLGSVGEPINPEAWRWYYEVVGDSRCPIVDTWWQTETGGILISPLAGAVDLKPGSATLPFFGVQPALVDAEGKILEGATEGNLVLLDSWPGQMRTVYGDHQRFIDTYFRTYPGSYFTGDGCRRDADGYYWITGRVDDVINVSGHRIGTAEVESALVSHPKVAEAAVVGFPHDVKGQGIYAYVTLIAGETPSEELHKELVSWVRKEIGPIASPDHLQWAPGLPKTRSGKIMRRILRKIAENAPDQLGDTSTLADPSVVDSLVNERLTR.

CoA is bound by residues 190-193, Thr-310, and Asn-334; that span reads RGGK. ATP contacts are provided by residues 386–388, 410–415, Asp-499, and Arg-514; these read GEP and DTWWQT. Ser-522 is a CoA binding site. Arg-525 contributes to the ATP binding site. Mg(2+)-binding residues include Val-536, His-538, and Val-541. Residue Arg-583 coordinates CoA. The residue at position 608 (Lys-608) is an N6-acetyllysine.

The protein belongs to the ATP-dependent AMP-binding enzyme family. The cofactor is Mg(2+). Post-translationally, acetylated. Deacetylation by the SIR2-homolog deacetylase activates the enzyme.

It carries out the reaction acetate + ATP + CoA = acetyl-CoA + AMP + diphosphate. Catalyzes the conversion of acetate into acetyl-CoA (AcCoA), an essential intermediate at the junction of anabolic and catabolic pathways. AcsA undergoes a two-step reaction. In the first half reaction, AcsA combines acetate with ATP to form acetyl-adenylate (AcAMP) intermediate. In the second half reaction, it can then transfer the acetyl group from AcAMP to the sulfhydryl group of CoA, forming the product AcCoA. This chain is Acetyl-coenzyme A synthetase, found in Xanthomonas campestris pv. campestris (strain 8004).